The primary structure comprises 91 residues: UPF0358 protein SAB0977 (91 aa).

The protein belongs to the UPF0358 family.

This is UPF0358 protein SAB0977 from Staphylococcus aureus (strain bovine RF122 / ET3-1).